Consider the following 337-residue polypeptide: Fructose-1,6-bisphosphatase class 1 (337 aa).

Mg(2+) is bound by residues Glu-90, Asp-112, Leu-114, and Asp-115. Residues 115–118 (DGSS), Asn-211, and Lys-277 each bind substrate. Residue Glu-283 participates in Mg(2+) binding.

The protein belongs to the FBPase class 1 family. As to quaternary structure, homotetramer. Mg(2+) is required as a cofactor.

It localises to the cytoplasm. The catalysed reaction is beta-D-fructose 1,6-bisphosphate + H2O = beta-D-fructose 6-phosphate + phosphate. Its pathway is carbohydrate biosynthesis; gluconeogenesis. This Azotobacter vinelandii (strain DJ / ATCC BAA-1303) protein is Fructose-1,6-bisphosphatase class 1.